A 537-amino-acid chain; its full sequence is Woronin body major protein hexA (537 aa).

3 stretches are compositionally biased toward basic and acidic residues: residues 1 to 17 (MYSV…RDAQ), 59 to 70 (DRTSHVEREDTR), and 116 to 134 (DSRV…RSEN). Disordered regions lie at residues 1-20 (MYSV…QRTA), 59-79 (DRTS…PDPR), 116-200 (DSRV…KPVY), and 269-295 (PKPL…SRPS). Residues 135–144 (NAKQNKNKNN) are compositionally biased toward low complexity. Residues 272-281 (LETRKGDSFS) are compositionally biased toward basic and acidic residues.

Belongs to the eIF-5A family. Hex1 subfamily. In terms of assembly, forms oligomers. Self-assembles into hexagonal rods. Binds directly or indirectly to the Woronin body tether lah.

It localises to the cell septum. The protein resides in the cytoplasm. Its function is as follows. Major component of Woronin bodies, fungal-specific organelles that occlude septal pores in order to separate intact from damaged compartments. HexA binds directly or indirectly to the Woronin body tether that in turn is anchored at the rim of the septal pore. Woronin bodies are important for stress resistance and virulence. The sequence is that of Woronin body major protein hexA from Aspergillus fumigatus (strain ATCC MYA-4609 / CBS 101355 / FGSC A1100 / Af293) (Neosartorya fumigata).